We begin with the raw amino-acid sequence, 277 residues long: Cation-dependent mannose-6-phosphate receptor (277 aa).

An N-terminal signal peptide occupies residues 1-26 (MFPFYSCWRTGLLLLLLAVAVRESWQ). Residues 27 to 185 (TEEKTCDLVG…SLACSPEISH (159 aa)) lie on the Lumenal side of the membrane. Residues 30-181 (KTCDLVGEKG…EMDSSLACSP (152 aa)) enclose the MRH domain. Residues C32 and C78 are joined by a disulfide bond. Residues N57, N83, N94, N107, and N113 are each glycosylated (N-linked (GlcNAc...) asparagine). 2 disulfide bridges follow: C132-C167 and C145-C179. Residues 186–210 (LSVGSILLVTFASLVAVYVVGGFLY) form a helical membrane-spanning segment. Over 211 to 277 (QRLVVGAKGM…EERDDHLLPM (67 aa)) the chain is Cytoplasmic. The tract at residues 256 to 277 (RGVGDDQLGEESEERDDHLLPM) is disordered. The residue at position 267 (S267) is a Phosphoserine.

Homodimer. Binds GGA1, GGA2 and GGA3.

It localises to the lysosome membrane. Functionally, transport of phosphorylated lysosomal enzymes from the Golgi complex and the cell surface to lysosomes. Lysosomal enzymes bearing phosphomannosyl residues bind specifically to mannose-6-phosphate receptors in the Golgi apparatus and the resulting receptor-ligand complex is transported to an acidic prelyosomal compartment where the low pH mediates the dissociation of the complex. This chain is Cation-dependent mannose-6-phosphate receptor (M6PR), found in Homo sapiens (Human).